Here is a 403-residue protein sequence, read N- to C-terminus: MFPIECHTLQTSFKQVLSLVAEKITTKAFVIFSVLFSLIIGFIASCGFLFAGPPAFIASGLCFALLVSVVSFFGCQKLIPYGIQHLMSYVKSIPSLSSSLIDFLKTESKSISSLYPNPGLKECFKGASPKYKKFFFDHPEKLLSAAFTDWTPQIIPSDSGQPRTIILSHSSLPFSLTLSTLDFETLHTHLIKSNALTCRVGYAHQLPSGNPVMREAKEGVLQQHYDTGNETFFISIQESKQLQQEELFKKLFSHYAQITEHNLSNEILLLEPLKTPLHTPKARTLELLALFCALEQLRYTKVADWRTKKLAPIFPLDYEDFFTLFMKKQHYTLPGNVSNMRILSPVRPVSETALTTIIISGLEEEDKLGLLGQVQPFLFDAEEAHPQRGESILIQNVLDDITQ.

Transmembrane regions (helical) follow at residues 29-49 and 55-75; these read FVIF…CGFL and AFIA…FFGC.

This sequence belongs to the chlamydial CPn_0129/CT_036/TC_0306 family.

Its subcellular location is the cell membrane. This is an uncharacterized protein from Chlamydia trachomatis serovar D (strain ATCC VR-885 / DSM 19411 / UW-3/Cx).